We begin with the raw amino-acid sequence, 320 residues long: Cytochrome c biogenesis protein CcsA (320 aa).

8 helical membrane-spanning segments follow: residues 9 to 29 (ILAH…WGTL), 36 to 56 (LSSS…GLLI), 70 to 90 (LYES…LLEV), 97 to 117 (WLGA…TLGL), 143 to 163 (ILFS…LLVI), 227 to 247 (AIGL…IWAN), 254 to 274 (WSWD…AIYL), and 288 to 308 (AIVA…VNLL).

This sequence belongs to the CcmF/CycK/Ccl1/NrfE/CcsA family. May interact with Ccs1.

It is found in the plastid. It localises to the chloroplast thylakoid membrane. Functionally, required during biogenesis of c-type cytochromes (cytochrome c6 and cytochrome f) at the step of heme attachment. The chain is Cytochrome c biogenesis protein CcsA from Pinus thunbergii (Japanese black pine).